The following is a 168-amino-acid chain: 3-dehydroquinate dehydratase (168 aa).

Y22 functions as the Proton acceptor in the catalytic mechanism. Substrate-binding residues include N76, H82, and D89. H102 functions as the Proton donor in the catalytic mechanism. Substrate-binding positions include L103–T104 and R113.

This sequence belongs to the type-II 3-dehydroquinase family. As to quaternary structure, homododecamer.

The enzyme catalyses 3-dehydroquinate = 3-dehydroshikimate + H2O. Its pathway is metabolic intermediate biosynthesis; chorismate biosynthesis; chorismate from D-erythrose 4-phosphate and phosphoenolpyruvate: step 3/7. In terms of biological role, catalyzes a trans-dehydration via an enolate intermediate. The chain is 3-dehydroquinate dehydratase from Helicobacter acinonychis (strain Sheeba).